Reading from the N-terminus, the 207-residue chain is Histidine biosynthesis bifunctional protein HisIE (207 aa).

The segment at methionine 1–phenylalanine 117 is phosphoribosyl-AMP cyclohydrolase. The tract at residues leucine 118–alanine 207 is phosphoribosyl-ATP pyrophosphohydrolase.

This sequence in the N-terminal section; belongs to the PRA-CH family. In the C-terminal section; belongs to the PRA-PH family.

It localises to the cytoplasm. It catalyses the reaction 1-(5-phospho-beta-D-ribosyl)-ATP + H2O = 1-(5-phospho-beta-D-ribosyl)-5'-AMP + diphosphate + H(+). The enzyme catalyses 1-(5-phospho-beta-D-ribosyl)-5'-AMP + H2O = 1-(5-phospho-beta-D-ribosyl)-5-[(5-phospho-beta-D-ribosylamino)methylideneamino]imidazole-4-carboxamide. It functions in the pathway amino-acid biosynthesis; L-histidine biosynthesis; L-histidine from 5-phospho-alpha-D-ribose 1-diphosphate: step 2/9. It participates in amino-acid biosynthesis; L-histidine biosynthesis; L-histidine from 5-phospho-alpha-D-ribose 1-diphosphate: step 3/9. This is Histidine biosynthesis bifunctional protein HisIE (hisI) from Campylobacter jejuni subsp. jejuni serotype O:2 (strain ATCC 700819 / NCTC 11168).